The chain runs to 121 residues: Alpha-endosulfine (121 aa).

The tract at residues 1–53 is disordered; sequence MSQKQEEENPAEETGEEKQDTQEKEGILPERAEEAKLKAKYPSLGQKPGGSDF. At Ser-2 the chain carries N-acetylserine. Ser-2 is subject to Phosphoserine. A compositionally biased stretch (basic and acidic residues) spans 16 to 37; that stretch reads EEKQDTQEKEGILPERAEEAKL. Thr-21 carries the phosphothreonine modification. The residue at position 43 (Ser-43) is a Phosphoserine. Ser-67 bears the Phosphoserine; by GWL mark. Residues 79–121 form a disordered region; sequence NKQLPSAGPDKNLVTGDHIPTPQDLPQRKSSLVTSKLAGGQVE. Ser-109 carries the post-translational modification Phosphoserine; by PKA.

Belongs to the endosulfine family. In terms of assembly, interacts (when phosphorylated at Ser-67) with PPP2R2D. Interacts with ABCC8. Interacts with SNCA; interaction is disrupted when phosphorylated at Ser-109. In terms of processing, phosphorylation at Ser-67 by GWL during mitosis is essential for interaction with PPP2R2D (PR55-delta) and subsequent inactivation of PP2A. Phosphorylated by PKA. As to expression, widely expressed with high levels in skeletal muscle and brain and lower levels in the pancreas.

It localises to the cytoplasm. Its function is as follows. Protein phosphatase inhibitor that specifically inhibits protein phosphatase 2A (PP2A) during mitosis. When phosphorylated at Ser-67 during mitosis, specifically interacts with PPP2R2D (PR55-delta) and inhibits its activity, leading to inactivation of PP2A, an essential condition to keep cyclin-B1-CDK1 activity high during M phase. Also acts as a stimulator of insulin secretion by interacting with sulfonylurea receptor (ABCC8), thereby preventing sulfonylurea from binding to its receptor and reducing K(ATP) channel currents. This chain is Alpha-endosulfine (ENSA), found in Homo sapiens (Human).